The chain runs to 470 residues: Cysteine--tRNA ligase (470 aa).

Cys-27 contributes to the Zn(2+) binding site. A 'HIGH' region motif is present at residues 29–39; that stretch reads PTVYNHIHIGN. Zn(2+) contacts are provided by Cys-207, His-232, and Glu-236. The 'KMSKS' region signature appears at 265–269; sequence KMAKS. Residue Lys-268 coordinates ATP.

It belongs to the class-I aminoacyl-tRNA synthetase family. In terms of assembly, monomer. Zn(2+) serves as cofactor.

It is found in the cytoplasm. It catalyses the reaction tRNA(Cys) + L-cysteine + ATP = L-cysteinyl-tRNA(Cys) + AMP + diphosphate. This is Cysteine--tRNA ligase from Rubrobacter xylanophilus (strain DSM 9941 / JCM 11954 / NBRC 16129 / PRD-1).